The following is a 156-amino-acid chain: Acanthoscurrin-1 (156 aa).

Residues 1–23 form the signal peptide; it reads MAFRMKLVVCIVLLSTLAVMSSA. Lys155 bears the Lysine amide mark.

In terms of tissue distribution, expressed in hemocytes and secreted into the plasma following bacterial immune challenge.

Its subcellular location is the secreted. Antimicrobial protein. Strong activity against the Gram-negative bacterium E.coli SBS363 and yeast C.albicans. No detectable activity against the Gram-positive bacterium M.luteus. This is Acanthoscurrin-1 from Acanthoscurria gomesiana (Tarantula spider).